The chain runs to 397 residues: Ubiquitin-like modifier-activating enzyme 5 (397 aa).

Residues Gly-76, Asp-97, Lys-120, Asn-143, and Asn-177 each coordinate ATP. Residues Cys-219 and Cys-222 each contribute to the Zn(2+) site. The active-site Glycyl thioester intermediate is the Cys-243. The Zn(2+) site is built by Cys-296 and Cys-301. Positions 327-339 (IVHEDNDWGIELV) match the UFM1-interacting sequence (UIS) motif. A linker region spans residues 340-370 (SETTEDELKAASGPVPDLPVGITVAYTIPNK). The UFC1-binding sequence (UFC) signature appears at 382–397 (ESEESLEDLMAKMRNL).

This sequence belongs to the ubiquitin-activating E1 family. UBA5 subfamily. Homodimer; homodimerization is required for UFM1 activation. Interacts (via UIS motif) with UFM1; binds UFM1 via a trans-binding mechanism in which UFM1 interacts with distinct sites in both subunits of the UBA5 homodimer. Interacts (via C-terminus) with UFC1.

The protein resides in the cytoplasm. Its subcellular location is the nucleus. It is found in the endoplasmic reticulum membrane. The protein localises to the golgi apparatus. In terms of biological role, E1-like enzyme which specifically catalyzes the first step in ufmylation. Activates UFM1 by first adenylating its C-terminal glycine residue with ATP, and thereafter linking this residue to the side chain of a cysteine residue in E1, yielding a UFM1-E1 thioester and free AMP. Activates UFM1 via a trans-binding mechanism, in which UFM1 interacts with distinct sites in both subunits of the UBA5 homodimer. Trans-binding also promotes stabilization of the UBA5 homodimer, and enhances ATP-binding. Transfer of UFM1 from UBA5 to the E2-like enzyme UFC1 also takes place using a trans mechanism. Ufmylation plays a key role in various processes, such as ribosome recycling, response to DNA damage, interferon response or reticulophagy (also called ER-phagy). The protein is Ubiquitin-like modifier-activating enzyme 5 of Gallus gallus (Chicken).